Consider the following 102-residue polypeptide: Small ribosomal subunit protein uS10 (102 aa).

This sequence belongs to the universal ribosomal protein uS10 family. In terms of assembly, part of the 30S ribosomal subunit.

Involved in the binding of tRNA to the ribosomes. The protein is Small ribosomal subunit protein uS10 of Staphylococcus aureus (strain Mu3 / ATCC 700698).